The sequence spans 26 residues: Hainantoxin F1-31.97 (26 aa).

2 disulfide bridges follow: Cys2–Cys16 and Cys9–Cys21.

This sequence belongs to the neurotoxin 10 (Hwtx-1) family. 17 (Hntx-9) subfamily. As to expression, expressed by the venom gland.

The protein localises to the secreted. Functionally, ion channel inhibitor. The sequence is that of Hainantoxin F1-31.97 from Cyriopagopus hainanus (Chinese bird spider).